An 83-amino-acid polypeptide reads, in one-letter code: MGSFSIWHWLIVLLIVVMVFGTKKLKNMGSDLGSAVKGFKDGMKDGGQSAAATDDKPAAPAGQVTNAQASDKTTIDVEARQKS.

Residues 1–21 (MGSFSIWHWLIVLLIVVMVFG) form a helical membrane-spanning segment. Residues 44–83 (KDGGQSAAATDDKPAAPAGQVTNAQASDKTTIDVEARQKS) form a disordered region. A compositionally biased stretch (polar residues) spans 63 to 72 (QVTNAQASDK). Residues 73-83 (TTIDVEARQKS) show a composition bias toward basic and acidic residues.

This sequence belongs to the TatA/E family. As to quaternary structure, the Tat system comprises two distinct complexes: a TatABC complex, containing multiple copies of TatA, TatB and TatC subunits, and a separate TatA complex, containing only TatA subunits. Substrates initially bind to the TatABC complex, which probably triggers association of the separate TatA complex to form the active translocon.

It is found in the cell inner membrane. Functionally, part of the twin-arginine translocation (Tat) system that transports large folded proteins containing a characteristic twin-arginine motif in their signal peptide across membranes. TatA could form the protein-conducting channel of the Tat system. This Polaromonas sp. (strain JS666 / ATCC BAA-500) protein is Sec-independent protein translocase protein TatA.